The sequence spans 1107 residues: Unconventional myosin-Ie (1107 aa).

Residues 19–692 (SGVDDMVLLS…SLFLLEEMRE (674 aa)) enclose the Myosin motor domain. 112 to 119 (GESGAGKT) contacts ATP. The interval 581 to 591 (PHYIRCIKPNE) is actin-binding. Residues 695 to 724 (YDGYARVIQKTWRKFVARKKYVQMREDASD) form the IQ domain. The TH1 domain maps to 730–922 (KERRRNSINR…NKVLQVSIGP (193 aa)). The interval 920-1052 (IGPGLPKNAR…KPQPKPKPQV (133 aa)) is disordered. Composition is skewed to polar residues over residues 933–949 (RNTV…NNNY), 977–989 (SGNQ…SLYT), and 998–1012 (RQQS…QTPE). At Ser1001 the chain carries Phosphoserine. Positions 1034 to 1051 (RPPPAGGRPKPQPKPKPQ) are enriched in pro residues. Residues 1050-1107 (PQVPQCKALYAYDAQDTDELSFNANDVIDIIKEDPSGWWTGRLRGKQGLFPNNYVTKI) enclose the SH3 domain.

The protein belongs to the TRAFAC class myosin-kinesin ATPase superfamily. Myosin family. In terms of assembly, interacts with CALM and F-actin. Interacts (via SH3 domain) with SYNJ1, DNM1 and DNM2. Interacts with ARL14EP. Interacts with CARMIL1. In terms of tissue distribution, detected in brain stem, brain cortex, cerebellum, stomach, colon, heart, lung, liver, spleen and kidney. Detected in utricle, cochlea, outer hair cell bundle cuticular plate and vestibular epithelia (at protein level). Detected in cochlea and vestibular tissues. Detected in kidney, lung, spleen and intestine.

The protein resides in the cytoplasm. It is found in the cytoskeleton. It localises to the cytoplasmic vesicle. The protein localises to the clathrin-coated vesicle. Its subcellular location is the cell junction. Its function is as follows. Myosins are actin-based motor molecules with ATPase activity. Unconventional myosins serve in intracellular movements. Their highly divergent tails bind to membranous compartments, which are then moved relative to actin filaments. Binds to membranes containing anionic phospholipids via its tail domain. Involved in clathrin-mediated endocytosis and intracellular movement of clathrin-coated vesicles. Required for normal morphology of the glomerular basement membrane, normal development of foot processes by kidney podocytes and normal kidney function. In dendritic cells, may control the movement of class II-containing cytoplasmic vesicles along the actin cytoskeleton by connecting them with the actin network via ARL14EP and ARL14. This Rattus norvegicus (Rat) protein is Unconventional myosin-Ie (Myo1e).